A 331-amino-acid chain; its full sequence is Ribosomal RNA small subunit methyltransferase H (331 aa).

S-adenosyl-L-methionine-binding positions include 38–40 (GGY), Asp56, Phe83, Asp100, and Gln107. The tract at residues 287–331 (DEAELAENPRARSARLRVGVRTDAPAGKVDPQALGTPLIPKKGRR) is disordered.

It belongs to the methyltransferase superfamily. RsmH family.

It localises to the cytoplasm. The catalysed reaction is cytidine(1402) in 16S rRNA + S-adenosyl-L-methionine = N(4)-methylcytidine(1402) in 16S rRNA + S-adenosyl-L-homocysteine + H(+). Its function is as follows. Specifically methylates the N4 position of cytidine in position 1402 (C1402) of 16S rRNA. The sequence is that of Ribosomal RNA small subunit methyltransferase H from Cereibacter sphaeroides (strain KD131 / KCTC 12085) (Rhodobacter sphaeroides).